Here is a 275-residue protein sequence, read N- to C-terminus: Ribosomal RNA small subunit methyltransferase A (275 aa).

S-adenosyl-L-methionine is bound by residues asparagine 19, leucine 21, glycine 46, glutamate 71, aspartate 94, and asparagine 117.

The protein belongs to the class I-like SAM-binding methyltransferase superfamily. rRNA adenine N(6)-methyltransferase family. RsmA subfamily.

It is found in the cytoplasm. The catalysed reaction is adenosine(1518)/adenosine(1519) in 16S rRNA + 4 S-adenosyl-L-methionine = N(6)-dimethyladenosine(1518)/N(6)-dimethyladenosine(1519) in 16S rRNA + 4 S-adenosyl-L-homocysteine + 4 H(+). In terms of biological role, specifically dimethylates two adjacent adenosines (A1518 and A1519) in the loop of a conserved hairpin near the 3'-end of 16S rRNA in the 30S particle. May play a critical role in biogenesis of 30S subunits. This chain is Ribosomal RNA small subunit methyltransferase A, found in Burkholderia orbicola (strain MC0-3).